A 68-amino-acid polypeptide reads, in one-letter code: UPF0434 protein BTH_I0741 (68 aa).

Belongs to the UPF0434 family.

This is UPF0434 protein BTH_I0741 from Burkholderia thailandensis (strain ATCC 700388 / DSM 13276 / CCUG 48851 / CIP 106301 / E264).